We begin with the raw amino-acid sequence, 444 residues long: E3 ubiquitin-protein ligase APD2 (444 aa).

Positions M1 to P15 are enriched in low complexity. Positions M1–P41 are disordered. Residues T17 to P41 show a composition bias toward basic and acidic residues. The next 2 helical transmembrane spans lie at V74–G94 and I312–F332. The segment at C393 to R432 adopts an RING-type zinc-finger fold.

In terms of assembly, interacts with At1g78040, At1g10650, VHA-c4/AVAP4, VHA-c''2/VMA16 and TUFA. As to expression, expressed in the shoot apical meristems (SAM), root tips, pollen and inflorescences.

The protein resides in the endomembrane system. The catalysed reaction is S-ubiquitinyl-[E2 ubiquitin-conjugating enzyme]-L-cysteine + [acceptor protein]-L-lysine = [E2 ubiquitin-conjugating enzyme]-L-cysteine + N(6)-ubiquitinyl-[acceptor protein]-L-lysine.. The protein operates within protein modification; protein ubiquitination. Exhibits E2-dependent E3 ligase activity. Involved in pollen mitosis II (PMII) regulation during male gametogenesis. This is E3 ubiquitin-protein ligase APD2 from Arabidopsis thaliana (Mouse-ear cress).